Here is a 309-residue protein sequence, read N- to C-terminus: Homoserine O-succinyltransferase (309 aa).

Cysteine 142 functions as the Acyl-thioester intermediate in the catalytic mechanism. The substrate site is built by lysine 163 and serine 192. Catalysis depends on histidine 235, which acts as the Proton acceptor. Glutamate 237 is an active-site residue. Arginine 249 contributes to the substrate binding site.

It belongs to the MetA family. As to quaternary structure, homodimer.

The protein resides in the cytoplasm. The catalysed reaction is L-homoserine + succinyl-CoA = O-succinyl-L-homoserine + CoA. It participates in amino-acid biosynthesis; L-methionine biosynthesis via de novo pathway; O-succinyl-L-homoserine from L-homoserine: step 1/1. Transfers a succinyl group from succinyl-CoA to L-homoserine, forming succinyl-L-homoserine. The protein is Homoserine O-succinyltransferase of Escherichia coli (strain SE11).